The primary structure comprises 648 residues: Replication protein E1 (648 aa).

The Nuclear localization signal motif lies at 83-85; the sequence is KRK. Phosphoserine; by host is present on residues Ser-89, Ser-93, and Ser-107. The Nuclear export signal signature appears at 106-115; the sequence is ISPRLDAIQL. The disordered stretch occupies residues 151 to 186; the sequence is YGEPENGCGGGGDGREKEGEGQVHTEVHTESEIEQH. A compositionally biased stretch (basic and acidic residues) spans 163–185; the sequence is DGREKEGEGQVHTEVHTESEIEQ. The interval 184–352 is DNA-binding region; it reads EQHTGTTRVL…QTIVEHGLAD (169 aa). The 151-residue stretch at 451–601 folds into the SF3 helicase domain; sequence IEFISFLSKL…FPFDSNGNAV (151 aa). 477–484 is an ATP binding site; sequence GPPDTGKS. Residue Lys-558 forms a Glycyl lysine isopeptide (Lys-Gly) (interchain with G-Cter in SUMO) linkage.

It belongs to the papillomaviridae E1 protein family. Can form hexamers. Interacts with E2 protein; this interaction increases E1 DNA binding specificity. Interacts with host DNA polymerase subunit POLA2. Interacts with host single stranded DNA-binding protein RPA1. Interacts with host TOP1; this interaction stimulates the enzymatic activity of TOP1. In terms of processing, phosphorylated. Post-translationally, sumoylated.

It is found in the host nucleus. It catalyses the reaction Couples ATP hydrolysis with the unwinding of duplex DNA by translocating in the 3'-5' direction.. The catalysed reaction is ATP + H2O = ADP + phosphate + H(+). ATP-dependent DNA 3'-5' helicase required for initiation of viral DNA replication. It forms a complex with the viral E2 protein. The E1-E2 complex binds to the replication origin which contains binding sites for both proteins. During the initial step, a dimer of E1 interacts with a dimer of protein E2 leading to a complex that binds the viral origin of replication with high specificity. Then, a second dimer of E1 displaces the E2 dimer in an ATP-dependent manner to form the E1 tetramer. Following this, two E1 monomers are added to each half of the site, which results in the formation of two E1 trimers on the viral ori. Subsequently, two hexamers will be created. The double hexamer acts as a bi-directional helicase machinery and unwinds the viral DNA and then recruits the host DNA polymerase to start replication. This chain is Replication protein E1, found in Pygmy chimpanzee papillomavirus type 1C (PCPV-1C).